The sequence spans 296 residues: Probable endonuclease 4 (296 aa).

9 residues coordinate Zn(2+): His68, His108, Glu145, Asp179, His182, His216, Asp229, His231, and Glu261.

This sequence belongs to the AP endonuclease 2 family. Requires Zn(2+) as cofactor.

The enzyme catalyses Endonucleolytic cleavage to 5'-phosphooligonucleotide end-products.. Endonuclease IV plays a role in DNA repair. It cleaves phosphodiester bonds at apurinic or apyrimidinic (AP) sites, generating a 3'-hydroxyl group and a 5'-terminal sugar phosphate. This Geobacter sulfurreducens (strain ATCC 51573 / DSM 12127 / PCA) protein is Probable endonuclease 4.